A 125-amino-acid polypeptide reads, in one-letter code: Fluoride-specific ion channel FluC (125 aa).

2 consecutive transmembrane segments (helical) span residues 4–24 (LWVA…GVWI) and 34–54 (YGTF…LTVL). Residues Gly74 and Thr77 each contribute to the Na(+) site. A helical transmembrane segment spans residues 99 to 119 (VLYFGSSLALGILAVWLGMVV).

It belongs to the fluoride channel Fluc/FEX (TC 1.A.43) family.

It is found in the cell inner membrane. The catalysed reaction is fluoride(in) = fluoride(out). With respect to regulation, na(+) is not transported, but it plays an essential structural role and its presence is essential for fluoride channel function. Fluoride-specific ion channel. Important for reducing fluoride concentration in the cell, thus reducing its toxicity. The polypeptide is Fluoride-specific ion channel FluC (Acidobacterium capsulatum (strain ATCC 51196 / DSM 11244 / BCRC 80197 / JCM 7670 / NBRC 15755 / NCIMB 13165 / 161)).